A 166-amino-acid polypeptide reads, in one-letter code: 3-hydroxyacyl-[acyl-carrier-protein] dehydratase FabZ (166 aa).

The active site involves His-72.

The protein belongs to the thioester dehydratase family. FabZ subfamily.

It is found in the cytoplasm. It catalyses the reaction a (3R)-hydroxyacyl-[ACP] = a (2E)-enoyl-[ACP] + H2O. In terms of biological role, involved in unsaturated fatty acids biosynthesis. Catalyzes the dehydration of short chain beta-hydroxyacyl-ACPs and long chain saturated and unsaturated beta-hydroxyacyl-ACPs. The protein is 3-hydroxyacyl-[acyl-carrier-protein] dehydratase FabZ of Synechococcus sp. (strain JA-3-3Ab) (Cyanobacteria bacterium Yellowstone A-Prime).